The following is a 324-amino-acid chain: Beta-ketoacyl-[acyl-carrier-protein] synthase III (324 aa).

Catalysis depends on residues Cys-114 and His-251. Positions 252 to 256 (QANKR) are ACP-binding. Asn-281 is an active-site residue.

It belongs to the thiolase-like superfamily. FabH family. Homodimer.

The protein resides in the cytoplasm. It carries out the reaction malonyl-[ACP] + acetyl-CoA + H(+) = 3-oxobutanoyl-[ACP] + CO2 + CoA. The protein operates within lipid metabolism; fatty acid biosynthesis. In terms of biological role, catalyzes the condensation reaction of fatty acid synthesis by the addition to an acyl acceptor of two carbons from malonyl-ACP. Catalyzes the first condensation reaction which initiates fatty acid synthesis and may therefore play a role in governing the total rate of fatty acid production. Possesses both acetoacetyl-ACP synthase and acetyl transacylase activities. Its substrate specificity determines the biosynthesis of branched-chain and/or straight-chain of fatty acids. The chain is Beta-ketoacyl-[acyl-carrier-protein] synthase III from Bradyrhizobium sp. (strain BTAi1 / ATCC BAA-1182).